The following is a 1024-amino-acid chain: Beta-galactosidase (1024 aa).

Residues asparagine 103 and aspartate 202 each coordinate substrate. Aspartate 202 provides a ligand contact to Na(+). Residues glutamate 417, histidine 419, and glutamate 462 each contribute to the Mg(2+) site. Substrate-binding positions include glutamate 462 and 538–541; that span reads EYAH. Glutamate 462 serves as the catalytic Proton donor. Glutamate 538 serves as the catalytic Nucleophile. Mg(2+) is bound at residue asparagine 598. Positions 602 and 605 each coordinate Na(+). Positions 605 and 1000 each coordinate substrate.

Belongs to the glycosyl hydrolase 2 family. As to quaternary structure, homotetramer. The cofactor is Mg(2+). Na(+) serves as cofactor.

It carries out the reaction Hydrolysis of terminal non-reducing beta-D-galactose residues in beta-D-galactosides.. In Escherichia coli (strain SMS-3-5 / SECEC), this protein is Beta-galactosidase.